Reading from the N-terminus, the 262-residue chain is Acyl-[acyl-carrier-protein]--UDP-N-acetylglucosamine O-acyltransferase (262 aa).

This sequence belongs to the transferase hexapeptide repeat family. LpxA subfamily. Homotrimer.

The protein localises to the cytoplasm. The catalysed reaction is a (3R)-hydroxyacyl-[ACP] + UDP-N-acetyl-alpha-D-glucosamine = a UDP-3-O-[(3R)-3-hydroxyacyl]-N-acetyl-alpha-D-glucosamine + holo-[ACP]. It functions in the pathway glycolipid biosynthesis; lipid IV(A) biosynthesis; lipid IV(A) from (3R)-3-hydroxytetradecanoyl-[acyl-carrier-protein] and UDP-N-acetyl-alpha-D-glucosamine: step 1/6. Involved in the biosynthesis of lipid A, a phosphorylated glycolipid that anchors the lipopolysaccharide to the outer membrane of the cell. This Salmonella arizonae (strain ATCC BAA-731 / CDC346-86 / RSK2980) protein is Acyl-[acyl-carrier-protein]--UDP-N-acetylglucosamine O-acyltransferase.